Consider the following 163-residue polypeptide: NADH-quinone oxidoreductase subunit I (163 aa).

2 4Fe-4S ferredoxin-type domains span residues 53–83 and 94–123; these read LRRY…IEAG and VRYD…EGPN. C63, C66, C69, C73, C103, C106, C109, and C113 together coordinate [4Fe-4S] cluster.

This sequence belongs to the complex I 23 kDa subunit family. In terms of assembly, NDH-1 is composed of 14 different subunits. Subunits NuoA, H, J, K, L, M, N constitute the membrane sector of the complex. [4Fe-4S] cluster serves as cofactor.

The protein resides in the cell inner membrane. The catalysed reaction is a quinone + NADH + 5 H(+)(in) = a quinol + NAD(+) + 4 H(+)(out). Its function is as follows. NDH-1 shuttles electrons from NADH, via FMN and iron-sulfur (Fe-S) centers, to quinones in the respiratory chain. The immediate electron acceptor for the enzyme in this species is believed to be ubiquinone. Couples the redox reaction to proton translocation (for every two electrons transferred, four hydrogen ions are translocated across the cytoplasmic membrane), and thus conserves the redox energy in a proton gradient. This chain is NADH-quinone oxidoreductase subunit I, found in Bartonella bacilliformis (strain ATCC 35685 / KC583 / Herrer 020/F12,63).